The primary structure comprises 475 residues: Probable GABA permease (475 aa).

12 helical membrane-spanning segments follow: residues 27–47 (VTMLSIAGVIGAGLFVGSGHA), 48–68 (IAAAGPAALLAYLIAGTLVVL), 105–125 (LYWWFWVLVIPLEAIAAAAIL), 127–147 (AWFPAIDTWIFALAVTFLLTV), 163–183 (FALLKVIAIIAFIVLGAVAIV), 211–231 (AVLGALLTTMFSFMGTEIVTI), 250–270 (VIWRIGLFYLVSIFIVISIVP), 296–316 (LIVDLVVLVAVASCLNSAIYT), 345–365 (PAVLASTAVGFLTTIVNYFAP), 368–388 (VFTFLLASSGAVALLVYLVIA), 413–433 (PWLTWAVILFIVAALSIMLIM), and 438–458 (HEVFATALLTIFTVCLGLLNA).

Belongs to the amino acid-polyamine-organocation (APC) superfamily. Amino acid transporter (AAT) (TC 2.A.3.1) family.

The protein resides in the membrane. In terms of biological role, involved in the degradation of beta-alanine. In Pseudomonas aeruginosa (strain ATCC 15692 / DSM 22644 / CIP 104116 / JCM 14847 / LMG 12228 / 1C / PRS 101 / PAO1), this protein is Probable GABA permease (bauD).